The following is a 624-amino-acid chain: Chaperone protein HtpG (624 aa).

The a; substrate-binding stretch occupies residues 1–338 (MNNKNKITHT…SQDLPLNISR (338 aa)). Positions 339–552 (EILQDSSITH…TNDMSTQMAK (214 aa)) are b. Residues 553–624 (IFSAAGQPIP…IQRINNFFIS (72 aa)) are c.

It belongs to the heat shock protein 90 family. Homodimer.

The protein resides in the cytoplasm. Functionally, molecular chaperone. Has ATPase activity. The polypeptide is Chaperone protein HtpG (Buchnera aphidicola subsp. Cinara cedri (strain Cc)).